A 648-amino-acid chain; its full sequence is Transketolase (648 aa).

His22 is a binding site for substrate. Thiamine diphosphate-binding positions include His62 and 109–111 (GPL). Asp150 lines the Mg(2+) pocket. Thiamine diphosphate contacts are provided by Gly151 and Asn180. The Mg(2+) site is built by Asn180 and Val182. Residues His252, Arg345, and Ser372 each coordinate substrate. Thiamine diphosphate is bound at residue His252. Glu397 acts as the Proton donor in catalysis. Phe423 is a thiamine diphosphate binding site. Positions 447, 455, and 506 each coordinate substrate.

Belongs to the transketolase family. As to quaternary structure, homodimer. The cofactor is Mg(2+). Ca(2+) serves as cofactor. Mn(2+) is required as a cofactor. It depends on Co(2+) as a cofactor. Requires thiamine diphosphate as cofactor.

The catalysed reaction is D-sedoheptulose 7-phosphate + D-glyceraldehyde 3-phosphate = aldehydo-D-ribose 5-phosphate + D-xylulose 5-phosphate. Catalyzes the transfer of a two-carbon ketol group from a ketose donor to an aldose acceptor, via a covalent intermediate with the cofactor thiamine pyrophosphate. The protein is Transketolase (tkt) of Mycoplasma pneumoniae (strain ATCC 29342 / M129 / Subtype 1) (Mycoplasmoides pneumoniae).